The following is a 396-amino-acid chain: GDSL esterase/lipase ACHE (396 aa).

Residues 1-31 form the signal peptide; the sequence is MATAATATAGSRAAVLLLLSLALALALRPSD. Ser49 acts as the Nucleophile in catalysis. Residues Asn108, Asn126, Asn151, Asn196, and Asn339 are each glycosylated (N-linked (GlcNAc...) asparagine). Catalysis depends on residues Asp359 and His362.

The protein belongs to the 'GDSL' lipolytic enzyme family.

The protein localises to the secreted. Esterase that can hydrolyze acetylthiocholine and propionylthiocholine in vitro. Substrate preference is propionylthiocholine &gt; acetylthiocholine. Possesses extremely low activity against butyrylthiocholine. In Zea mays (Maize), this protein is GDSL esterase/lipase ACHE.